A 170-amino-acid polypeptide reads, in one-letter code: MASVPAPATTTAAVILCLCVVLSCAAADDPNLPDYVIQGRVYCDTCRAGFVTNVTEYIAGAKVRLECKHFGTGKLERAIDGVTDATGTYTIELKDSHEEDICQVVLVASPRKDCDEVQALRDRAGVLLTRNVGISDSLRPANPLGYFKDVPLPVCAALLKQLDSDDDDDQ.

The N-terminal stretch at 1–27 (MASVPAPATTTAAVILCLCVVLSCAAA) is a signal peptide. 3 disulfides stabilise this stretch: Cys43–Cys114, Cys46–Cys155, and Cys67–Cys102. The N-linked (GlcNAc...) asparagine glycan is linked to Asn53.

The protein belongs to the Ole e I family. Pollen.

The protein is Pollen-specific protein C13 (MGS1) of Zea mays (Maize).